We begin with the raw amino-acid sequence, 208 residues long: Ras-related protein Rab-6B (208 aa).

GTP contacts are provided by residues G20 to T27, T45, D68 to Q72, and N126 to D129. An Effector region motif is present at residues Y42–F50. 2 S-geranylgeranyl cysteine lipidation sites follow: C206 and C208. Residue C208 is modified to Cysteine methyl ester.

Belongs to the small GTPase superfamily. Rab family. As to quaternary structure, interacts (GTP-bound) with BICD1 (via C-terminus); the interaction is direct. Interacts (GDP-bound) with DYNLRB1. Interacts (GTP-bound) with APBA1/MINT1. Interacts (GTP-bound) with VPS13B.

The protein localises to the golgi apparatus membrane. Its subcellular location is the endoplasmic reticulum-Golgi intermediate compartment. It is found in the cytoplasmic vesicle. The enzyme catalyses GTP + H2O = GDP + phosphate + H(+). Its activity is regulated as follows. Regulated by guanine nucleotide exchange factors (GEFs) which promote the exchange of bound GDP for free GTP, GTPase activating proteins (GAPs) which increase the GTP hydrolysis activity, and GDP dissociation inhibitors which inhibit the dissociation of the nucleotide from the GTPase. Functionally, the small GTPases Rab are key regulators of intracellular membrane trafficking, from the formation of transport vesicles to their fusion with membranes. Rabs cycle between active GTP-bound and inactive GDP-bound states. In their active state, drive transport of vesicular carriers from donor organelles to acceptor organelles to regulate the membrane traffic that maintains organelle identity and morphology. Recruits VPS13B to the Golgi membrane. Regulates the compacted morphology of the Golgi. Seems to have a role in retrograde membrane traffic at the level of the Golgi complex. May function in retrograde transport in neuronal cells. Plays a role in neuron projection development. The chain is Ras-related protein Rab-6B (RAB6B) from Bos taurus (Bovine).